A 407-amino-acid chain; its full sequence is MSAVPLRNNKPGRAEVRSITVLGATGSIGESTMDLLRGAPERYRVEALTGNSNVQGLAKLAREFKPGFVAVADPARLNELRDALAGTGIACGAGESAIIEAAARPADWVMAAVSGAAGLKPALAAVDRGATVALANKECLVCAGDFFMQRAAQAGACILPADSEHNALFQALSSGNREELVRVIITASGGPFRTWAAADIEQATLAQALKHPNWSMGQKITIDSASMMNKGLEVIEASYLFALSPDEIDVLVHPQSIVHGMVEFSDRSVVAQLGAPDMRIPIAHCLGWPDRIAGPSARLDLAKIGTLTFEAPDFVRFPGLRLAYDSLRTGRGATTVYNAANEVAVAAFAAGQIRFGAIARLVEATLEHWTRSGNQAPLTSADDAIAIDHDARKTAAGLLPQIAAKAS.

The NADPH site is built by threonine 25, glycine 26, serine 27, isoleucine 28, asparagine 53, and asparagine 136. A 1-deoxy-D-xylulose 5-phosphate-binding site is contributed by lysine 137. Glutamate 138 contributes to the NADPH binding site. A Mn(2+)-binding site is contributed by aspartate 162. Positions 163, 164, 188, and 211 each coordinate 1-deoxy-D-xylulose 5-phosphate. Position 164 (glutamate 164) interacts with Mn(2+). Glycine 217 provides a ligand contact to NADPH. Residues serine 224, asparagine 229, lysine 230, and glutamate 233 each contribute to the 1-deoxy-D-xylulose 5-phosphate site. Glutamate 233 contacts Mn(2+).

Belongs to the DXR family. The cofactor is Mg(2+). It depends on Mn(2+) as a cofactor.

It carries out the reaction 2-C-methyl-D-erythritol 4-phosphate + NADP(+) = 1-deoxy-D-xylulose 5-phosphate + NADPH + H(+). The protein operates within isoprenoid biosynthesis; isopentenyl diphosphate biosynthesis via DXP pathway; isopentenyl diphosphate from 1-deoxy-D-xylulose 5-phosphate: step 1/6. Catalyzes the NADPH-dependent rearrangement and reduction of 1-deoxy-D-xylulose-5-phosphate (DXP) to 2-C-methyl-D-erythritol 4-phosphate (MEP). The sequence is that of 1-deoxy-D-xylulose 5-phosphate reductoisomerase from Bradyrhizobium sp. (strain BTAi1 / ATCC BAA-1182).